Reading from the N-terminus, the 1171-residue chain is Protein WWC2 (1171 aa).

2 consecutive WW domains span residues 9–42 and 56–89; these read LPLP…DPRD and NELP…DPRK. 3 coiled-coil regions span residues 120 to 193, 223 to 257, and 301 to 420; these read KEQR…YKEQ, ELKS…LEEA, and LAEK…KSAT. 2 disordered regions span residues 521–552 and 603–637; these read SPTA…LSPP and QALA…KNPD. Low complexity predominate over residues 534–551; it reads PKSVTSLSSLSSLSSLSP. Basic and acidic residues-rich tracts occupy residues 606–616 and 625–637; these read AERKSTGEGLR and GRTD…KNPD. The region spanning 684 to 806 is the C2 domain; that stretch reads GAAQAQLILR…FSNDVHTQWY (123 aa). Coiled-coil stretches lie at residues 836–870 and 1047–1123; these read LDLD…EQLC and DLEL…NAEK.

This sequence belongs to the WWC family.

The protein resides in the cytoplasm. The protein localises to the cytosol. Its function is as follows. Negative regulator of the Hippo signaling pathway, also known as the Salvador-Warts-Hippo (SWH) pathway. The polypeptide is Protein WWC2 (wwc2) (Xenopus tropicalis (Western clawed frog)).